A 118-amino-acid polypeptide reads, in one-letter code: Beta-2-microglobulin (118 aa).

The first 20 residues, 1 to 20, serve as a signal peptide directing secretion; sequence MARVVALVLLGLLSLTGLEA. The Ig-like C1-type domain occupies 25 to 111; that stretch reads PKVQVYSRHP…QHSTLKEPLI (87 aa). Cys-45 and Cys-99 form a disulfide bridge.

Belongs to the beta-2-microglobulin family. Heterodimer of an alpha chain and a beta chain. Beta-2-microglobulin is the beta-chain of major histocompatibility complex class I molecules.

The protein localises to the secreted. Its function is as follows. Component of the class I major histocompatibility complex (MHC). Involved in the presentation of peptide antigens to the immune system. The protein is Beta-2-microglobulin (B2M) of Equus asinus (Donkey).